The sequence spans 433 residues: AP-2 complex subunit mu (433 aa).

Residues 168-432 (RNELFLDVLE…IGRSGIYETR (265 aa)) enclose the MHD domain. The a 1,2-diacyl-sn-glycero-3-phospho-(1D-myo-inositol-3,4,5-trisphosphate) site is built by K339, K343, and K352.

This sequence belongs to the adaptor complexes medium subunit family. In terms of assembly, adaptor protein complex 2 (AP-2) is a heterotetramer composed of two large adaptins (alpha-type subunit and beta-type subunit), a medium adaptin (mu-type subunit) and a small adaptin (sigma-type subunit).

It localises to the cell membrane. It is found in the membrane. The protein resides in the coated pit. Component of the adaptor complexes which link clathrin to receptors in coated vesicles. Clathrin-associated protein complexes are believed to interact with the cytoplasmic tails of membrane proteins, leading to their selection and concentration. AP50 is a subunit of the plasma membrane adaptor. The complex binds polyphosphoinositide-containing lipids. The polypeptide is AP-2 complex subunit mu (AP2M1) (Gallus gallus (Chicken)).